The sequence spans 519 residues: Protein twist (519 aa).

Disordered regions lie at residues 53–77 (MQQQ…QQQY), 131–156 (NFEQ…VATA), 301–321 (YEAY…SDRD), and 368–389 (FRKP…DEFS). Low complexity-rich tracts occupy residues 54-76 (QQQQ…QQQQ) and 134-146 (QQQQ…QQQQ). Residues 308–317 (NSLNGSTYSS) show a composition bias toward polar residues. The span at 368-379 (FRKPRRRLKRKP) shows a compositional bias: basic residues. The 52-residue stretch at 390–441 (NQRVMANVRERQRTQSLNDAFKALQQIIPTLPSDKLSKIQTLKLATRYIDFL) folds into the bHLH domain.

In terms of assembly, efficient DNA binding requires dimerization with another bHLH protein. Homodimer.

Its subcellular location is the nucleus. Functionally, involved in the establishment and dorsoventral patterning of germ layers in the embryo. In Drosophila virilis (Fruit fly), this protein is Protein twist.